Here is a 414-residue protein sequence, read N- to C-terminus: Voltage-gated ClC-type chloride channel ClcB (414 aa).

Transmembrane regions (helical) follow at residues 5-25 (LVISIMLGMVSALIVWLFHQA), 54-74 (ALTPALGGLAAGLLLWAYQRY), 116-136 (SAIGREGAMVLLAALFASVFA), 147-167 (LWVACGAAAGMASAYHAPLAG), 169-189 (LFIAEILFGTLMLASLGPVVI), 220-240 (VQYFLMALLGLMAGFSGPLFL), 255-275 (LLPPLQLALGGIIVGLLSLIF), 292-312 (TPPGVLLIGGILICKLLAVLA), 327-347 (LFVGAALGMLCGQIFSLWPVL), 353-373 (LLMALTGMATLLAATTHAPIM), and 381-401 (MTGEYTLLPGLLLSCVIATTI).

This sequence belongs to the chloride channel (TC 2.A.49) family. ClcB subfamily.

It is found in the cell inner membrane. Functionally, probably acts as an electrical shunt for an outwardly-directed proton pump that is linked to amino acid decarboxylation, as part of the extreme acid resistance (XAR) response. This is Voltage-gated ClC-type chloride channel ClcB from Yersinia pseudotuberculosis serotype O:1b (strain IP 31758).